The chain runs to 507 residues: ATP synthase subunit alpha (507 aa).

170-177 (GDRQTGKT) is an ATP binding site.

This sequence belongs to the ATPase alpha/beta chains family. As to quaternary structure, F-type ATPases have 2 components, CF(1) - the catalytic core - and CF(0) - the membrane proton channel. CF(1) has five subunits: alpha(3), beta(3), gamma(1), delta(1), epsilon(1). CF(0) has three main subunits: a(1), b(2) and c(9-12). The alpha and beta chains form an alternating ring which encloses part of the gamma chain. CF(1) is attached to CF(0) by a central stalk formed by the gamma and epsilon chains, while a peripheral stalk is formed by the delta and b chains.

The protein resides in the cell inner membrane. It catalyses the reaction ATP + H2O + 4 H(+)(in) = ADP + phosphate + 5 H(+)(out). In terms of biological role, produces ATP from ADP in the presence of a proton gradient across the membrane. The alpha chain is a regulatory subunit. The sequence is that of ATP synthase subunit alpha from Thermosipho africanus (strain TCF52B).